Here is a 713-residue protein sequence, read N- to C-terminus: Phospholipase A1 PLIP2, chloroplastic (713 aa).

A chloroplast-targeting transit peptide spans 1 to 32 (MDSLCLNSGLHGVIPAITAVGNGGCGGVVEVR). Disordered regions lie at residues 118-140 (WKHE…DEEV) and 232-261 (ALKA…EKNK). Positions 122-140 (EEEDDDEVEDEDGDEDEEV) are enriched in acidic residues. The short motif at 426–430 (GHSLG) is the GXSXG element. The Acyl-ester intermediate role is filled by Ser-428. Catalysis depends on charge relay system residues Asp-489 and His-608.

The protein belongs to the AB hydrolase superfamily. Lipase family.

It localises to the plastid. The protein localises to the chloroplast membrane. The protein resides in the chloroplast stroma. The enzyme catalyses a 1,2-diacyl-3-O-(beta-D-galactosyl)-sn-glycerol + 2 H2O = 3-beta-D-galactosyl-sn-glycerol + 2 a fatty acid + 2 H(+). It catalyses the reaction a 1,2-diacyl-sn-glycero-3-phosphocholine + H2O = a 2-acyl-sn-glycero-3-phosphocholine + a fatty acid + H(+). The catalysed reaction is 1-hexadecanoyl-2-(9Z-octadecenoyl)-sn-glycero-3-phosphocholine + H2O = 2-(9Z-octadecenoyl)-sn-glycero-3-phosphocholine + hexadecanoate + H(+). It carries out the reaction 1,2-di-(9Z-octadecenoyl)-sn-glycero-3-phosphocholine + H2O = 2-(9Z-octadecenoyl)-sn-glycero-3-phosphocholine + (9Z)-octadecenoate + H(+). The enzyme catalyses 1-octadecanoyl-2-(9Z-octadecenoyl)-sn-glycero-3-phosphocholine + H2O = 2-(9Z-octadecenoyl)-sn-glycero-3-phosphocholine + octadecanoate + H(+). It catalyses the reaction 1-octadecanoyl-2-(9Z,12Z)-octadecadienoyl-sn-glycero-3-phosphocholine + H2O = 2-(9Z,12Z-octadecadienoyl)-sn-glycero-3-phosphocholine + octadecanoate + H(+). The catalysed reaction is 1,2-di-(9Z,12Z-octadecadienoyl)-sn-glycero-3-phosphocholine + H2O = 2-(9Z,12Z-octadecadienoyl)-sn-glycero-3-phosphocholine + (9Z,12Z)-octadecadienoate + H(+). It carries out the reaction 1-(9Z-octadecenoyl)-2-hexadecanoyl-sn-glycero-3-phosphocholine + H2O = 2-hexadecanoyl-sn-glycero-3-phosphocholine + (9Z)-octadecenoate + H(+). In terms of biological role, sn-1-specific phospholipase A1 that catalyzes the initial step of oxylipins and jasmonate (JA) biosynthesis. Hydrolyzes polyunsaturated acyl groups preferentially from chloroplastic monogalactosyldiacylglycerol (MGDG). May function downstream of abscisic acid (ABA) and provide a link between ABA-mediated abiotic stress responses and oxylipin and JA signalings. In vitro, possesses broad substrate specificity. Can hydrolyze the galactolipids monogalactosyldiacylglycerol (MGDG) and digalactosyldiacylglycerol (DGDG), the sulfolipid sulfoquinovosyldiacylglycerol (SQDG), and the phoshpolipids phosphatidylcholine (PC), and phosphatidylglycerol (PG). The polypeptide is Phospholipase A1 PLIP2, chloroplastic (Arabidopsis thaliana (Mouse-ear cress)).